The chain runs to 109 residues: Putative polyketide cyclase (109 aa).

This sequence to polyketide cyclases.

In terms of biological role, involved in developmentally regulated synthesis of a compound biosynthetically related to polyketide antibiotics which is essential for spore color in Streptomyces halstedii. This Streptomyces halstedii protein is Putative polyketide cyclase (sch4).